A 311-amino-acid chain; its full sequence is MADQLIRAMAAEGGIRAVGVITTRLTEEARQRHKLSWVASVVLGRTMAAGLLLASSMKTPESRVNIRVQGNGPLGEVLVDAGLDGTVRGYVNNPTIELLPNKIGKHDIGKAVGNQGYLYIVRDIGYGYPYSGTVELVSGEIGDDITHYLAKSEQTPSALVLGVFVDKEGVQTAGGILLQVMPKVAIDEELVQVLESRIASLSGFTSLLHSGKTLPEIFQELLGDMGLNILPEAQIVRFKCDCSMEKVLRALRMFGVDELQNMIEEDKGAEVTCEFCSQLYQASPKELTQIIQDLQQPSTEVPLGQLRRSSH.

Disulfide bonds link cysteine 240-cysteine 242 and cysteine 273-cysteine 276.

Belongs to the HSP33 family. In terms of processing, under oxidizing conditions two disulfide bonds are formed involving the reactive cysteines. Under reducing conditions zinc is bound to the reactive cysteines and the protein is inactive.

The protein localises to the cytoplasm. Redox regulated molecular chaperone. Protects both thermally unfolding and oxidatively damaged proteins from irreversible aggregation. Plays an important role in the bacterial defense system toward oxidative stress. This Trichodesmium erythraeum (strain IMS101) protein is 33 kDa chaperonin.